A 218-amino-acid chain; its full sequence is Glutathione S-transferase Mu 3 (218 aa).

Positions 2 to 88 constitute a GST N-terminal domain; sequence PMTLGYWNTR…YLGRKHNLCG (87 aa). Residues 7 to 8, 46 to 50, and 59 to 60 contribute to the glutathione site; these read YW, WLSEK, and NL. A Glycyl lysine isopeptide (Lys-Gly) (interchain with G-Cter in SUMO2) cross-link involves residue K50. Residue K69 forms a Glycyl lysine isopeptide (Lys-Gly) (interchain with G-Cter in SUMO2) linkage. 72 to 73 is a binding site for glutathione; it reads QS. The 119-residue stretch at 90-208 folds into the GST C-terminal domain; sequence TEEERIRVDT…KSSRFLPRPV (119 aa).

It belongs to the GST superfamily. Mu family. In terms of assembly, homodimer.

It localises to the cytoplasm. It catalyses the reaction RX + glutathione = an S-substituted glutathione + a halide anion + H(+). Its function is as follows. Conjugation of reduced glutathione to a wide number of exogenous and endogenous hydrophobic electrophiles. The polypeptide is Glutathione S-transferase Mu 3 (Gstm3) (Mus musculus (Mouse)).